The following is a 159-amino-acid chain: MQKRAIYPGTFDPITNGHIDIVTRATQMFDHVILAIAASPSKKPMFTLEERVALAQHATAHLGNVEVVGFSDLMANFARNQHATVLIRGLRAVADFEYEMQLAHMNRHLMPELESVFLMPSKEWSFISSSLVKEVARHQGDVTHFLPENVHQALMAKLA.

T10 contributes to the substrate binding site. Residues 10 to 11 (TF) and H18 contribute to the ATP site. 3 residues coordinate substrate: K42, M74, and R88. ATP is bound by residues 89-91 (GLR), E99, and 124-130 (WSFISSS).

It belongs to the bacterial CoaD family. In terms of assembly, homohexamer. Requires Mg(2+) as cofactor.

The protein localises to the cytoplasm. It carries out the reaction (R)-4'-phosphopantetheine + ATP + H(+) = 3'-dephospho-CoA + diphosphate. The protein operates within cofactor biosynthesis; coenzyme A biosynthesis; CoA from (R)-pantothenate: step 4/5. Its function is as follows. Reversibly transfers an adenylyl group from ATP to 4'-phosphopantetheine, yielding dephospho-CoA (dPCoA) and pyrophosphate. This is Phosphopantetheine adenylyltransferase from Escherichia fergusonii (strain ATCC 35469 / DSM 13698 / CCUG 18766 / IAM 14443 / JCM 21226 / LMG 7866 / NBRC 102419 / NCTC 12128 / CDC 0568-73).